The sequence spans 110 residues: Large ribosomal subunit protein uL22 (110 aa).

The protein belongs to the universal ribosomal protein uL22 family. As to quaternary structure, part of the 50S ribosomal subunit.

Its function is as follows. This protein binds specifically to 23S rRNA; its binding is stimulated by other ribosomal proteins, e.g. L4, L17, and L20. It is important during the early stages of 50S assembly. It makes multiple contacts with different domains of the 23S rRNA in the assembled 50S subunit and ribosome. In terms of biological role, the globular domain of the protein is located near the polypeptide exit tunnel on the outside of the subunit, while an extended beta-hairpin is found that lines the wall of the exit tunnel in the center of the 70S ribosome. This Salmonella arizonae (strain ATCC BAA-731 / CDC346-86 / RSK2980) protein is Large ribosomal subunit protein uL22.